A 478-amino-acid chain; its full sequence is Putative L-amino-acid oxidase YobN (478 aa).

FAD contacts are provided by residues Ser-34, Glu-53, Arg-61, and 80 to 81 (MR). 2 residues coordinate substrate: Arg-81 and Tyr-369. Residues Glu-451 and 460 to 463 (MQGA) each bind FAD.

This sequence belongs to the flavin monoamine oxidase family. FIG1 subfamily. Requires FAD as cofactor.

The enzyme catalyses an L-alpha-amino acid + O2 + H2O = a 2-oxocarboxylate + H2O2 + NH4(+). In Bacillus subtilis (strain 168), this protein is Putative L-amino-acid oxidase YobN (yobN).